The primary structure comprises 378 residues: Probable endopolygalacturonase NFIA_008150 (378 aa).

The N-terminal stretch at 1 to 19 (MLKLIGSLVLLASAAEVIA) is a signal peptide. Residues 20 to 35 (SPLAESVAPSITLEKR) constitute a propeptide that is removed on maturation. C38 and C56 are joined by a disulfide. 3 PbH1 repeats span residues 147–169 (TSSS…SING), 170–200 (CDGL…DIGS), and 201–222 (SSNI…AVNS). Residue D215 is the Proton donor of the active site. A disulfide bond links C217 and C233. The active site involves H237. PbH1 repeat units follow at residues 247-273 (RSDN…RIKA) and 281-303 (IKGI…LIEQ). A glycan (N-linked (GlcNAc...) asparagine) is linked at N254. N327 is a glycosylation site (N-linked (GlcNAc...) asparagine). Disulfide bonds link C345/C350 and C369/C378.

It belongs to the glycosyl hydrolase 28 family.

It localises to the secreted. It catalyses the reaction (1,4-alpha-D-galacturonosyl)n+m + H2O = (1,4-alpha-D-galacturonosyl)n + (1,4-alpha-D-galacturonosyl)m.. Functionally, involved in maceration and soft-rotting of plant tissue. Hydrolyzes the 1,4-alpha glycosidic bonds of de-esterified pectate in the smooth region of the plant cell wall. In Neosartorya fischeri (strain ATCC 1020 / DSM 3700 / CBS 544.65 / FGSC A1164 / JCM 1740 / NRRL 181 / WB 181) (Aspergillus fischerianus), this protein is Probable endopolygalacturonase NFIA_008150.